The primary structure comprises 622 residues: Pyranose 2-oxidase (622 aa).

A signal peptide spans 1–28; that stretch reads MSTSSSDPFYNFAKTSFKSAAAQKASAT. Positions 29–38 are excised as a propeptide; the sequence is SLPPLPGPDQ. Position 167 is a tele-8alpha-FAD histidine (His167). Substrate contacts are provided by Gln448 and His450. His548 functions as the Proton acceptor in the catalytic mechanism. Asn593 is a catalytic residue.

Belongs to the GMC oxidoreductase family. Homotetramer. The cofactor is FAD.

The protein localises to the periplasm. It carries out the reaction D-glucose + O2 = 2-dehydro-D-glucose + H2O2. In terms of biological role, catalyzes the oxidation of various aldopyranoses and disaccharides on carbon-2 to the corresponding 2-keto sugars concomitant with the reduction of O(2) to H(2)O(2). Plays an important role in lignin degradation of wood rot fungi by supplying the essential cosubstrate H(2)O(2) for the ligninolytic peroxidases, lignin peroxidase and manganese-dependent peroxidase. This is Pyranose 2-oxidase (p2ox) from Trametes pubescens (White-rot fungus).